The chain runs to 279 residues: Pantothenate synthetase (279 aa).

31 to 38 lines the ATP pocket; sequence MGNLHGGH. The active-site Proton donor is histidine 38. Residue glutamine 62 participates in (R)-pantoate binding. Glutamine 62 lines the beta-alanine pocket. 150–153 lines the ATP pocket; sequence GRKD. Glutamine 156 contributes to the (R)-pantoate binding site. ATP is bound by residues valine 179 and 187–190; that span reads KSSR.

Belongs to the pantothenate synthetase family. As to quaternary structure, homodimer.

The protein resides in the cytoplasm. The catalysed reaction is (R)-pantoate + beta-alanine + ATP = (R)-pantothenate + AMP + diphosphate + H(+). The protein operates within cofactor biosynthesis; (R)-pantothenate biosynthesis; (R)-pantothenate from (R)-pantoate and beta-alanine: step 1/1. Functionally, catalyzes the condensation of pantoate with beta-alanine in an ATP-dependent reaction via a pantoyl-adenylate intermediate. This chain is Pantothenate synthetase, found in Stenotrophomonas maltophilia (strain R551-3).